Consider the following 245-residue polypeptide: MEVMVGSSFGIGMAAYVRDHRGVSAQDKAVQTALFLADESGRGGSQIGIGLRMSNNNNKSPEESSDSSSSIGESSENEEEEEEDDAVSCQRGTLDSFSSSLEDSLPIKRGLSNHYVGKSKSFGNLMEAASKAKDLEKVENPFNKRRRLVIANKLRRRGRSMSASNFYSWQNPNSMPLLALQEPNEEDHHIHNDDYEDDDGDGDDHRKIMMMMKNKKELMAQTRSCFCLSSLQEEDDGDGDDDEDE.

Residues 46 to 90 (QIGIGLRMSNNNNKSPEESSDSSSSIGESSENEEEEEEDDAVSCQ) are disordered. Positions 75 to 86 (SENEEEEEEDDA) are enriched in acidic residues. A Nuclear localization signal motif is present at residues 143-151 (NKRRRLVIA). The interval 203–230 (DDHRKIMMMMKNKKELMAQTRSCFCLSS) is kinase-inducible domain (KID).

It is found in the nucleus. In terms of biological role, probable transcription factor. Promotes slightly the tolerance to cadmium (Cd) and to oxidizing chemicals (e.g. diamide). This is Protein OXIDATIVE STRESS 3 LIKE 6 from Arabidopsis thaliana (Mouse-ear cress).